The primary structure comprises 67 residues: DNA gyrase inhibitor YacG (67 aa).

Cys-9, Cys-12, Cys-28, and Cys-32 together coordinate Zn(2+). The tract at residues 48–67 (PVSPDAEDELFSEELPPRAH) is disordered.

This sequence belongs to the DNA gyrase inhibitor YacG family. Interacts with GyrB. The cofactor is Zn(2+).

In terms of biological role, inhibits all the catalytic activities of DNA gyrase by preventing its interaction with DNA. Acts by binding directly to the C-terminal domain of GyrB, which probably disrupts DNA binding by the gyrase. This is DNA gyrase inhibitor YacG from Pseudomonas fluorescens (strain ATCC BAA-477 / NRRL B-23932 / Pf-5).